The chain runs to 237 residues: Coat protein (237 aa).

The segment at 1-24 (MSAPASTTQPIGSTTSTTTKTAGA) is disordered.

Belongs to the potexvirus capsid protein family.

Its subcellular location is the virion. Required for genome encapsidation. Forms ribonucleoprotein complexes along with TGB1 helicase and viral RNA. This is Coat protein from Potato virus X (strain UK3) (PVX).